An 881-amino-acid polypeptide reads, in one-letter code: MGCLGNQLLIAILLLSVYGIYCTQYVTVFYGVPAWRNATIPLFCATKNRDTWGTTQCLPDNGDYSELALNVTESFDAWENTVTEQAIEDVWQLFETSIKPCVKLSPLCITMRCNKSETDRWGLTKSSTTITTAAPTSAPVSEKIDMVNETSSCIAQNNCTGLEQEQMISCKFTMTGLKRDKTKEYNETWYSTDLVCEQGNSTDNESRCYMNHCNTSVIQESCDKHYWDTIRFRYCAPPGYALLRCNDTNYSGFMPKCSKVVVSSCTRMMETQTSTWFGFNGTRAENRTYIYWHGRDNRTIISLNKYYNLTMKCRRPGNKTVLPVTIMSGLVFHSQPLTDRPKQAWCWFGGKWKDAIKEVKQTIVKHPRYTGTNNTDKINLTAPGGGDPEVTFMWTNCRGEFLYCKMNWFLNWVEDRDVTTQRPKERHRRNYVPCHIRQIINTWHKVGKNVYLPPREGDLTCNSTVTSLIANIDWTDGNQTSITMSAEVAELYRLELGDYKLVEITPIGLAPTDVKRYTTGGTSRNKRGVFVLGFLGFLATAGSAMGAASFRLTAQSRTLLAGIVQQQQQLLGVVKRQQELLRLTVWGTKNLQTRVTAIEKYLEDQAQLNAWGCAFRQVCHTTVPWPNASLTPDWNNDTWQEWERKVDFLEENITALLEEAQIQQEKNMYELQKLNSWDVFGNWFDLASWIKYIQYGIYVVVGVILLRIVIYIVQMLAKLRQGYRPVFSSPPSYFQXTHTQQDPALPTREGKEGDGGEGGGNSSWPWQIEYIHFLIRQLIRLLTWLFSNCRTLLSRAYQILQPILQRLSATLRRIREVLRTELTYLQYGWSYFHEAVQAGWRSATETLAGAWGDLWETLRRGGRWILAIPRRIRQGLELTLL.

The N-terminal stretch at 1 to 19 is a signal peptide; sequence MGCLGNQLLIAILLLSVYG. Residues 20-696 lie on the Extracellular side of the membrane; that stretch reads IYCTQYVTVF…ASWIKYIQYG (677 aa). N-linked (GlcNAc...) asparagine; by host glycosylation is present at N37. A disulfide bridge links C44 with C57. 17 N-linked (GlcNAc...) asparagine; by host glycosylation sites follow: N70, N114, N148, N158, N186, N200, N204, N214, N246, N249, N280, N286, N297, N308, N318, N373, and N379. 5 cysteine pairs are disulfide-bonded: C101-C222, C108-C213, C113-C170, C235-C265, and C245-C257. Residues 113 to 169 are V1; the sequence is CNKSETDRWGLTKSSTTITTAAPTSAPVSEKIDMVNETSSCIAQNNCTGLEQEQMIS. Positions 170–213 are V2; that stretch reads CKFTMTGLKRDKTKEYNETWYSTDLVCEQGNSTDNESRCYMNHC. The tract at residues 313–345 is V3; that stretch reads CRRPGNKTVLPVTIMSGLVFHSQPLTDRPKQAW. A disulfide bridge connects residues C313 and C346. Disulfide bonds link C397–C461 and C404–C434. A V4 region spans residues 404-434; the sequence is CKMNWFLNWVEDRDVTTQRPKERHRRNYVPC. 2 N-linked (GlcNAc...) asparagine; by host glycosylation sites follow: N462 and N478. The segment at 477 to 484 is V5; it reads GNQTSITM. The segment at 528-548 is fusion peptide; the sequence is GVFVLGFLGFLATAGSAMGAA. Residues 591–607 are immunosuppression; the sequence is LQTRVTAIEKYLEDQAQ. 3 N-linked (GlcNAc...) asparagine; by host glycosylation sites follow: N627, N636, and N652. Residues 636–668 are a coiled coil; it reads NDTWQEWERKVDFLEENITALLEEAQIQQEKNM. Positions 673–694 are MPER; binding to GalCer; it reads KLNSWDVFGNWFDLASWIKYIQ. A helical membrane pass occupies residues 697–717; the sequence is IYVVVGVILLRIVIYIVQMLA. Residues 718–881 are Cytoplasmic-facing; the sequence is KLRQGYRPVF…IRQGLELTLL (164 aa). The YXXV motif; contains endocytosis signal signature appears at 723-726; sequence YRPV. The disordered stretch occupies residues 737 to 761; it reads THTQQDPALPTREGKEGDGGEGGGN. A lipid anchor (S-palmitoyl cysteine; by host) is attached at C789. The Di-leucine internalization motif signature appears at 880–881; sequence LL.

The mature envelope protein (Env) consists of a homotrimer of non-covalently associated gp120-gp41 heterodimers. The resulting complex protrudes from the virus surface as a spike. Interacts with host CD4 and CCR5. Gp120 also interacts with the C-type lectins CD209/DC-SIGN and CLEC4M/DC-SIGNR (collectively referred to as DC-SIGN(R)). In terms of assembly, the mature envelope protein (Env) consists of a homotrimer of non-covalently associated gp120-gp41 heterodimers. The resulting complex protrudes from the virus surface as a spike. Specific enzymatic cleavages in vivo yield mature proteins. Envelope glycoproteins are synthesized as an inactive precursor that is heavily N-glycosylated and processed likely by host cell furin in the Golgi to yield the mature SU and TM proteins. The cleavage site between SU and TM requires the minimal sequence [KR]-X-[KR]-R. In terms of processing, palmitoylation of the transmembrane protein and of Env polyprotein (prior to its proteolytic cleavage) is essential for their association with host cell membrane lipid rafts. Palmitoylation is therefore required for envelope trafficking to classical lipid rafts, but not for viral replication.

The protein localises to the virion membrane. It localises to the host cell membrane. Its subcellular location is the host endosome membrane. The surface protein gp120 (SU) attaches the virus to the host lymphoid cell by binding to the primary receptor CD4. This interaction induces a structural rearrangement creating a high affinity binding site for a chemokine coreceptor like CCR5. This peculiar 2 stage receptor-interaction strategy allows gp120 to maintain the highly conserved coreceptor-binding site in a cryptic conformation, protected from neutralizing antibodies. These changes are transmitted to the transmembrane protein gp41 and are thought to activate its fusogenic potential by unmasking its fusion peptide. In terms of biological role, surface protein gp120 (SU) may target the virus to gut-associated lymphoid tissue (GALT) by binding host ITGA4/ITGB7 (alpha-4/beta-7 integrins), a complex that mediates T-cell migration to the GALT. Interaction between gp120 and ITGA4/ITGB7 would allow the virus to enter GALT early in the infection, infecting and killing most of GALT's resting CD4+ T-cells. This T-cell depletion is believed to be the major insult to the host immune system leading to AIDS. Its function is as follows. The surface protein gp120 is a ligand for CD209/DC-SIGN and CLEC4M/DC-SIGNR, which are respectively found on dendritic cells (DCs), and on endothelial cells of liver sinusoids and lymph node sinuses. These interactions allow capture of viral particles at mucosal surfaces by these cells and subsequent transmission to permissive cells. DCs are professional antigen presenting cells, critical for host immunity by inducing specific immune responses against a broad variety of pathogens. They act as sentinels in various tissues where they take up antigen, process it, and present it to T-cells following migration to lymphoid organs. SIV subverts the migration properties of dendritic cells to gain access to CD4+ T-cells in lymph nodes. Virus transmission to permissive T-cells occurs either in trans (without DCs infection, through viral capture and transmission), or in cis (following DCs productive infection, through the usual CD4-gp120 interaction), thereby inducing a robust infection. In trans infection, bound virions remain infectious over days and it is proposed that they are not degraded, but protected in non-lysosomal acidic organelles within the DCs close to the cell membrane thus contributing to the viral infectious potential during DCs' migration from the periphery to the lymphoid tissues. On arrival at lymphoid tissues, intact virions recycle back to DCs' cell surface allowing virus transmission to CD4+ T-cells. Virion capture also seems to lead to MHC-II-restricted viral antigen presentation, and probably to the activation of SIV-specific CD4+ cells. Functionally, the transmembrane protein gp41 (TM) acts as a class I viral fusion protein. Under the current model, the protein has at least 3 conformational states: pre-fusion native state, pre-hairpin intermediate state, and post-fusion hairpin state. During fusion of viral and target intracellular membranes, the coiled coil regions (heptad repeats) assume a trimer-of-hairpins structure, positioning the fusion peptide in close proximity to the C-terminal region of the ectodomain. The formation of this structure appears to drive apposition and subsequent fusion of viral and target cell membranes. Complete fusion occurs in host cell endosomes. The virus undergoes clathrin-dependent internalization long before endosomal fusion, thus minimizing the surface exposure of conserved viral epitopes during fusion and reducing the efficacy of inhibitors targeting these epitopes. Membranes fusion leads to delivery of the nucleocapsid into the cytoplasm. The envelope glycoprotein gp160 precursor down-modulates cell surface CD4 antigen by interacting with it in the endoplasmic reticulum and blocking its transport to the cell surface. In terms of biological role, the gp120-gp41 heterodimer allows rapid transcytosis of the virus through CD4 negative cells such as simple epithelial monolayers of the intestinal, rectal and endocervical epithelial barriers. Both gp120 and gp41 specifically recognize glycosphingolipids galactosyl-ceramide (GalCer) or 3' sulfo-galactosyl-ceramide (GalS) present in the lipid rafts structures of epithelial cells. Binding to these alternative receptors allows the rapid transcytosis of the virus through the epithelial cells. This transcytotic vesicle-mediated transport of virions from the apical side to the basolateral side of the epithelial cells does not involve infection of the cells themselves. This chain is Envelope glycoprotein gp160 (env), found in Simian immunodeficiency virus (isolate K6W) (SIV-mac).